Reading from the N-terminus, the 359-residue chain is UPF0283 membrane protein R01807 (359 aa).

2 helical membrane passes run 76-96 (FGKI…GLWI) and 109-129 (WLGY…LIVV).

This sequence belongs to the UPF0283 family.

The protein localises to the cell inner membrane. This chain is UPF0283 membrane protein R01807, found in Rhizobium meliloti (strain 1021) (Ensifer meliloti).